Consider the following 475-residue polypeptide: MATASTAATFRPSSVSASSELTHLRSPSKLPKFTPLPSARSRSSSSFSVSCTIAKDPAVVMADSEKIKAAGSDPTMWQRPDSFGRFGKFGGKYVPETLMHALSELETAFYSLATDEDFQRELAEILKDYVGRESPLYFAERLTEHYRRENGEGPLIYLKREDLNHTGAHKINNAVAQALLAKRLGKKRIIAETGAGQHGVATATVCARFGLQCIIYMGAQDMERQALNVFRMRLLGAEVRGVHSGTATLKDATSEAIRDWVTNVETTHYILGSVAGPHPYPMMVRDFHAVIGKETRKQAMEKWGGKPDVLVACVGGGSNAMGLFHEFVDDTEVRMIGVEAAGFGLDSGKHAATLTKGDVGVLHGAMSYLLQDDDGQIIEPHSISAGLDYPGVGPEHSFLKDVGRAEYFSVTDEEALEAFKRVSRLEGIIPALETSHALAHLEKLCPTLPDGARVVLNFSGRGDKDVQTAIKYLEV.

Positions 1–21 (MATASTAATFRPSSVSASSEL) are enriched in polar residues. The interval 1-44 (MATASTAATFRPSSVSASSELTHLRSPSKLPKFTPLPSARSRSS) is disordered. The N-terminal 51 residues, 1 to 51 (MATASTAATFRPSSVSASSELTHLRSPSKLPKFTPLPSARSRSSSSFSVSC), are a transit peptide targeting the chloroplast. An N-acetylthreonine modification is found at T52. K170 bears the N6-(pyridoxal phosphate)lysine mark.

This sequence belongs to the TrpB family. As to quaternary structure, tetramer of two alpha and two beta chains. Pyridoxal 5'-phosphate serves as cofactor.

It is found in the plastid. The protein localises to the chloroplast. The catalysed reaction is (1S,2R)-1-C-(indol-3-yl)glycerol 3-phosphate + L-serine = D-glyceraldehyde 3-phosphate + L-tryptophan + H2O. It participates in amino-acid biosynthesis; L-tryptophan biosynthesis; L-tryptophan from chorismate: step 5/5. Its function is as follows. The beta subunit is responsible for the synthesis of L-tryptophan from indole and L-serine. In Arabidopsis thaliana (Mouse-ear cress), this protein is Tryptophan synthase beta chain 2, chloroplastic (TSB2).